The sequence spans 226 residues: Ribonuclease 3 (226 aa).

Positions 7–129 (DARLQQALGY…LFGAVFLDAG (123 aa)) constitute an RNase III domain. Residue glutamate 42 participates in Mg(2+) binding. The active site involves aspartate 46. Residues aspartate 115 and glutamate 118 each coordinate Mg(2+). Residue glutamate 118 is part of the active site. The DRBM domain maps to 156-226 (DPKTRLQEIL…ARQACAELQR (71 aa)).

This sequence belongs to the ribonuclease III family. In terms of assembly, homodimer. It depends on Mg(2+) as a cofactor.

The protein resides in the cytoplasm. The enzyme catalyses Endonucleolytic cleavage to 5'-phosphomonoester.. Digests double-stranded RNA. Involved in the processing of primary rRNA transcript to yield the immediate precursors to the large and small rRNAs (23S and 16S). Processes some mRNAs, and tRNAs when they are encoded in the rRNA operon. Processes pre-crRNA and tracrRNA of type II CRISPR loci if present in the organism. In Thiobacillus denitrificans (strain ATCC 25259 / T1), this protein is Ribonuclease 3.